The following is a 326-amino-acid chain: tRNA dimethylallyltransferase (326 aa).

An ATP-binding site is contributed by 18 to 25 (GPTASGKS). 20-25 (TASGKS) lines the substrate pocket. Interaction with substrate tRNA regions lie at residues 43–46 (DSMQ) and 167–171 (QRIAR).

It belongs to the IPP transferase family. Monomer. The cofactor is Mg(2+).

The catalysed reaction is adenosine(37) in tRNA + dimethylallyl diphosphate = N(6)-dimethylallyladenosine(37) in tRNA + diphosphate. Functionally, catalyzes the transfer of a dimethylallyl group onto the adenine at position 37 in tRNAs that read codons beginning with uridine, leading to the formation of N6-(dimethylallyl)adenosine (i(6)A). The polypeptide is tRNA dimethylallyltransferase (Rhodospirillum rubrum (strain ATCC 11170 / ATH 1.1.1 / DSM 467 / LMG 4362 / NCIMB 8255 / S1)).